We begin with the raw amino-acid sequence, 234 residues long: Leucyl/phenylalanyl-tRNA--protein transferase (234 aa).

It belongs to the L/F-transferase family.

It localises to the cytoplasm. It catalyses the reaction N-terminal L-lysyl-[protein] + L-leucyl-tRNA(Leu) = N-terminal L-leucyl-L-lysyl-[protein] + tRNA(Leu) + H(+). The catalysed reaction is N-terminal L-arginyl-[protein] + L-leucyl-tRNA(Leu) = N-terminal L-leucyl-L-arginyl-[protein] + tRNA(Leu) + H(+). It carries out the reaction L-phenylalanyl-tRNA(Phe) + an N-terminal L-alpha-aminoacyl-[protein] = an N-terminal L-phenylalanyl-L-alpha-aminoacyl-[protein] + tRNA(Phe). Functionally, functions in the N-end rule pathway of protein degradation where it conjugates Leu, Phe and, less efficiently, Met from aminoacyl-tRNAs to the N-termini of proteins containing an N-terminal arginine or lysine. The polypeptide is Leucyl/phenylalanyl-tRNA--protein transferase (Pseudoalteromonas atlantica (strain T6c / ATCC BAA-1087)).